A 437-amino-acid polypeptide reads, in one-letter code: CCA-adding enzyme (437 aa).

ATP is bound by residues S50 and K53. 2 residues coordinate CTP: S50 and K53. Mg(2+) is bound by residues D61, D63, and D112. Residues H135, K155, and Y164 each coordinate ATP. Positions 135, 155, and 164 each coordinate CTP.

This sequence belongs to the tRNA nucleotidyltransferase/poly(A) polymerase family. Archaeal CCA-adding enzyme subfamily. In terms of assembly, homodimer. Mg(2+) serves as cofactor.

The enzyme catalyses a tRNA precursor + 2 CTP + ATP = a tRNA with a 3' CCA end + 3 diphosphate. It carries out the reaction a tRNA with a 3' CCA end + 2 CTP + ATP = a tRNA with a 3' CCACCA end + 3 diphosphate. Catalyzes the addition and repair of the essential 3'-terminal CCA sequence in tRNAs without using a nucleic acid template. Adds these three nucleotides in the order of C, C, and A to the tRNA nucleotide-73, using CTP and ATP as substrates and producing inorganic pyrophosphate. tRNA 3'-terminal CCA addition is required both for tRNA processing and repair. Also involved in tRNA surveillance by mediating tandem CCA addition to generate a CCACCA at the 3' terminus of unstable tRNAs. While stable tRNAs receive only 3'-terminal CCA, unstable tRNAs are marked with CCACCA and rapidly degraded. The protein is CCA-adding enzyme of Thermoplasma volcanium (strain ATCC 51530 / DSM 4299 / JCM 9571 / NBRC 15438 / GSS1).